A 577-amino-acid chain; its full sequence is Arginine--tRNA ligase (577 aa).

The 'HIGH' region motif lies at 122–132 (PNVAKEMHVGH).

It belongs to the class-I aminoacyl-tRNA synthetase family. In terms of assembly, monomer.

The protein resides in the cytoplasm. The catalysed reaction is tRNA(Arg) + L-arginine + ATP = L-arginyl-tRNA(Arg) + AMP + diphosphate. The chain is Arginine--tRNA ligase from Escherichia fergusonii (strain ATCC 35469 / DSM 13698 / CCUG 18766 / IAM 14443 / JCM 21226 / LMG 7866 / NBRC 102419 / NCTC 12128 / CDC 0568-73).